The sequence spans 288 residues: Phosphatidylserine decarboxylase proenzyme (288 aa).

Active-site charge relay system; for autoendoproteolytic cleavage activity residues include aspartate 101, histidine 158, and serine 262. Serine 262 serves as the catalytic Schiff-base intermediate with substrate; via pyruvic acid; for decarboxylase activity. At serine 262 the chain carries Pyruvic acid (Ser); by autocatalysis.

Belongs to the phosphatidylserine decarboxylase family. PSD-B subfamily. Prokaryotic type I sub-subfamily. In terms of assembly, heterodimer of a large membrane-associated beta subunit and a small pyruvoyl-containing alpha subunit. The cofactor is pyruvate. Post-translationally, is synthesized initially as an inactive proenzyme. Formation of the active enzyme involves a self-maturation process in which the active site pyruvoyl group is generated from an internal serine residue via an autocatalytic post-translational modification. Two non-identical subunits are generated from the proenzyme in this reaction, and the pyruvate is formed at the N-terminus of the alpha chain, which is derived from the carboxyl end of the proenzyme. The autoendoproteolytic cleavage occurs by a canonical serine protease mechanism, in which the side chain hydroxyl group of the serine supplies its oxygen atom to form the C-terminus of the beta chain, while the remainder of the serine residue undergoes an oxidative deamination to produce ammonia and the pyruvoyl prosthetic group on the alpha chain. During this reaction, the Ser that is part of the protease active site of the proenzyme becomes the pyruvoyl prosthetic group, which constitutes an essential element of the active site of the mature decarboxylase.

It localises to the cell membrane. It catalyses the reaction a 1,2-diacyl-sn-glycero-3-phospho-L-serine + H(+) = a 1,2-diacyl-sn-glycero-3-phosphoethanolamine + CO2. The protein operates within phospholipid metabolism; phosphatidylethanolamine biosynthesis; phosphatidylethanolamine from CDP-diacylglycerol: step 2/2. In terms of biological role, catalyzes the formation of phosphatidylethanolamine (PtdEtn) from phosphatidylserine (PtdSer). This Alkalilimnicola ehrlichii (strain ATCC BAA-1101 / DSM 17681 / MLHE-1) protein is Phosphatidylserine decarboxylase proenzyme.